Reading from the N-terminus, the 187-residue chain is MYSASDLRKNLRIKLEGDPYIITEFNFVKPGKGQALYRCKLKNMITGNQFERTFRSVDNFEAADLQEKKMQFLYTEEDRYCFMDNTSYEQIFLTADQVGDAAHFLIDNLEVEILLFEDKPLGISLPNFVDLVVTKADPWAKGDTVSGNTKPVTLQTGYQIMVPPFIEEGEKIRVDTRTGEYLTRVKG.

Belongs to the elongation factor P family.

The protein resides in the cytoplasm. Its pathway is protein biosynthesis; polypeptide chain elongation. Its function is as follows. Involved in peptide bond synthesis. Stimulates efficient translation and peptide-bond synthesis on native or reconstituted 70S ribosomes in vitro. Probably functions indirectly by altering the affinity of the ribosome for aminoacyl-tRNA, thus increasing their reactivity as acceptors for peptidyl transferase. The polypeptide is Elongation factor P (Syntrophus aciditrophicus (strain SB)).